The sequence spans 121 residues: DNA-directed RNA polymerase subunit Rpo8 (121 aa).

It belongs to the archaeal Rpo8 RNA polymerase subunit family. As to quaternary structure, part of the 13-subunit RNA polymerase complex. Post-translationally, this subunit is phosphorylated.

The protein localises to the cytoplasm. The catalysed reaction is RNA(n) + a ribonucleoside 5'-triphosphate = RNA(n+1) + diphosphate. In terms of biological role, DNA-dependent RNA polymerase (RNAP) catalyzes the transcription of DNA into RNA using the four ribonucleoside triphosphates as substrates. The polypeptide is DNA-directed RNA polymerase subunit Rpo8 (Sulfolobus acidocaldarius (strain ATCC 33909 / DSM 639 / JCM 8929 / NBRC 15157 / NCIMB 11770)).